We begin with the raw amino-acid sequence, 298 residues long: Tyrosine recombinase XerD (298 aa).

A Core-binding (CB) domain is found at 3-88 (SSHNNLLQNF…AIRQFYKFLK (86 aa)). The region spanning 109–292 (SIPDYLTQDE…ANKTLREVHK (184 aa)) is the Tyr recombinase domain. Residues Arg149, Lys173, His244, Arg247, and His270 contribute to the active site. Tyr279 (O-(3'-phospho-DNA)-tyrosine intermediate) is an active-site residue.

This sequence belongs to the 'phage' integrase family. XerD subfamily. Forms a cyclic heterotetrameric complex composed of two molecules of XerC and two molecules of XerD.

Its subcellular location is the cytoplasm. Functionally, site-specific tyrosine recombinase, which acts by catalyzing the cutting and rejoining of the recombining DNA molecules. The XerC-XerD complex is essential to convert dimers of the bacterial chromosome into monomers to permit their segregation at cell division. It also contributes to the segregational stability of plasmids. The chain is Tyrosine recombinase XerD from Leptospira interrogans serogroup Icterohaemorrhagiae serovar copenhageni (strain Fiocruz L1-130).